Here is a 1086-residue protein sequence, read N- to C-terminus: Isoleucine--tRNA ligase (1086 aa).

The short motif at 53-63 is the 'HIGH' region element; that stretch reads PFANGLPHYGH. The 'KMSKS' region motif lies at 624–628; it reads KLSKR. Lys627 is a binding site for ATP.

It belongs to the class-I aminoacyl-tRNA synthetase family. IleS type 2 subfamily. As to quaternary structure, monomer. Zn(2+) serves as cofactor.

It localises to the cytoplasm. The enzyme catalyses tRNA(Ile) + L-isoleucine + ATP = L-isoleucyl-tRNA(Ile) + AMP + diphosphate. Catalyzes the attachment of isoleucine to tRNA(Ile). As IleRS can inadvertently accommodate and process structurally similar amino acids such as valine, to avoid such errors it has two additional distinct tRNA(Ile)-dependent editing activities. One activity is designated as 'pretransfer' editing and involves the hydrolysis of activated Val-AMP. The other activity is designated 'posttransfer' editing and involves deacylation of mischarged Val-tRNA(Ile). This chain is Isoleucine--tRNA ligase, found in Rickettsia typhi (strain ATCC VR-144 / Wilmington).